The sequence spans 230 residues: Thymidylate kinase (230 aa).

ATP is bound at residue 20–27; sequence GGEGSGKS.

It belongs to the thymidylate kinase family.

The catalysed reaction is dTMP + ATP = dTDP + ADP. Its function is as follows. Phosphorylation of dTMP to form dTDP in both de novo and salvage pathways of dTTP synthesis. The sequence is that of Thymidylate kinase from Nitrobacter hamburgensis (strain DSM 10229 / NCIMB 13809 / X14).